A 190-amino-acid chain; its full sequence is Putative resolvase R771 (190 aa).

Residues 11-30 (SSVLGVHQRTLYQWDKKGWI) constitute a DNA-binding region (H-T-H motif). A Resolvase/invertase-type recombinase catalytic domain is found at 61–190 (LSICYVRVSS…RNGLKKYSNK (130 aa)). Residues 66-92 (VRVSSNNQKDDLERQIKFMKKKYPNHT) are a coiled coil. S69 acts as the O-(5'-phospho-DNA)-serine intermediate in catalysis.

It belongs to the site-specific recombinase resolvase family.

Its function is as follows. Resolvase catalyzes the resolution (a site-specific recombination) of the cointegrated replicon to yield the final transposition products. This Acanthamoeba polyphaga (Amoeba) protein is Putative resolvase R771.